A 206-amino-acid polypeptide reads, in one-letter code: Large ribosomal subunit protein uL4 (206 aa).

Residues 65 to 85 form a disordered region; the sequence is KQKGSGGARHGDRKAPQFRGG.

It belongs to the universal ribosomal protein uL4 family. As to quaternary structure, part of the 50S ribosomal subunit.

Its function is as follows. One of the primary rRNA binding proteins, this protein initially binds near the 5'-end of the 23S rRNA. It is important during the early stages of 50S assembly. It makes multiple contacts with different domains of the 23S rRNA in the assembled 50S subunit and ribosome. In terms of biological role, forms part of the polypeptide exit tunnel. In Parvibaculum lavamentivorans (strain DS-1 / DSM 13023 / NCIMB 13966), this protein is Large ribosomal subunit protein uL4.